The sequence spans 141 residues: Hemoglobin subunit alpha (141 aa).

The Globin domain occupies 1-141 (VLSPADKTNV…VSTVLTSKYR (141 aa)). A Phosphoserine modification is found at serine 3. The residue at position 7 (lysine 7) is an N6-succinyllysine. Threonine 8 carries the post-translational modification Phosphothreonine. At lysine 11 the chain carries N6-succinyllysine. Lysine 16 is modified (N6-acetyllysine; alternate). Position 16 is an N6-succinyllysine; alternate (lysine 16). Tyrosine 24 carries the phosphotyrosine modification. At serine 35 the chain carries Phosphoserine. At lysine 40 the chain carries N6-succinyllysine. Serine 49 carries the post-translational modification Phosphoserine. Histidine 58 contributes to the O2 binding site. Histidine 87 lines the heme b pocket. Serine 102 carries the post-translational modification Phosphoserine. Threonine 108 is subject to Phosphothreonine. The residue at position 124 (serine 124) is a Phosphoserine. Residues threonine 134 and threonine 137 each carry the phosphothreonine modification. Serine 138 bears the Phosphoserine mark.

The protein belongs to the globin family. As to quaternary structure, heterotetramer of two alpha chains and two beta chains. As to expression, red blood cells.

Involved in oxygen transport from the lung to the various peripheral tissues. In terms of biological role, hemopressin acts as an antagonist peptide of the cannabinoid receptor CNR1. Hemopressin-binding efficiently blocks cannabinoid receptor CNR1 and subsequent signaling. The chain is Hemoglobin subunit alpha (HBA) from Odobenus rosmarus divergens (Pacific walrus).